A 370-amino-acid polypeptide reads, in one-letter code: Isopentenyl-diphosphate delta-isomerase (370 aa).

8-9 (RK) contributes to the substrate binding site. Residues T65, 66–68 (GMT), S99, and N127 contribute to the FMN site. Substrate is bound at residue 99–101 (SQR). Residue Q166 participates in substrate binding. Mg(2+) is bound at residue E167. FMN-binding positions include K198, S223, T228, 277 to 279 (GMR), and 298 to 299 (AL).

Belongs to the IPP isomerase type 2 family. As to quaternary structure, homooctamer. Dimer of tetramers. FMN serves as cofactor. It depends on NADPH as a cofactor. Requires Mg(2+) as cofactor.

The protein localises to the cytoplasm. The enzyme catalyses isopentenyl diphosphate = dimethylallyl diphosphate. Its function is as follows. Involved in the biosynthesis of isoprenoids. Catalyzes the 1,3-allylic rearrangement of the homoallylic substrate isopentenyl (IPP) to its allylic isomer, dimethylallyl diphosphate (DMAPP). This is Isopentenyl-diphosphate delta-isomerase from Pyrococcus abyssi (strain GE5 / Orsay).